The sequence spans 342 residues: Oxygen-dependent coproporphyrinogen-III oxidase (342 aa).

Serine 98 lines the substrate pocket. Positions 102 and 112 each coordinate a divalent metal cation. Catalysis depends on histidine 112, which acts as the Proton donor. Residue 114-116 participates in substrate binding; sequence NYR. A divalent metal cation contacts are provided by histidine 146 and histidine 176. Residues 266-301 form an important for dimerization region; the sequence is YVEFNLVWDRGTIFGLQTNGRTESILMSLPPLARWE.

It belongs to the aerobic coproporphyrinogen-III oxidase family. As to quaternary structure, homodimer. Requires a divalent metal cation as cofactor.

The protein localises to the cytoplasm. It carries out the reaction coproporphyrinogen III + O2 + 2 H(+) = protoporphyrinogen IX + 2 CO2 + 2 H2O. It participates in porphyrin-containing compound metabolism; protoporphyrin-IX biosynthesis; protoporphyrinogen-IX from coproporphyrinogen-III (O2 route): step 1/1. Its function is as follows. Involved in the heme and chlorophyll biosynthesis. Catalyzes the aerobic oxidative decarboxylation of propionate groups of rings A and B of coproporphyrinogen-III to yield the vinyl groups in protoporphyrinogen-IX. This chain is Oxygen-dependent coproporphyrinogen-III oxidase, found in Prochlorococcus marinus (strain AS9601).